Here is a 115-residue protein sequence, read N- to C-terminus: Tyrosine-protein phosphatase 19 (115 aa).

In terms of domain architecture, Tyrosine-protein phosphatase spans 1–115 (WLMIVEQKCR…ETGSDAPMVV (115 aa)). Residue aspartate 83 coordinates substrate.

Belongs to the protein-tyrosine phosphatase family.

The catalysed reaction is O-phospho-L-tyrosyl-[protein] + H2O = L-tyrosyl-[protein] + phosphate. In Styela plicata (Wrinkled sea squirt), this protein is Tyrosine-protein phosphatase 19 (STY-19).